The chain runs to 558 residues: Factor VII-activating protease (558 aa).

Positions 1 to 23 (MFVRMLVFRVLLLIALVGKSVIG) are cleaved as a signal peptide. EGF-like domains are found at residues 71–107 (DDDP…SRCQ), 109–146 (AQNK…PDCS), and 148–186 (VLPA…KFCE). 18 disulfides stabilise this stretch: Cys75/Cys86, Cys80/Cys95, Cys97/Cys106, Cys113/Cys123, Cys118/Cys134, Cys136/Cys145, Cys152/Cys163, Cys157/Cys174, Cys176/Cys185, Cys192/Cys274, Cys213/Cys255, Cys244/Cys269, Cys299/Cys433, Cys345/Cys361, Cys353/Cys422, Cys445/Cys513, Cys475/Cys491, and Cys503/Cys531. The Kringle domain maps to 191-274 (DCYVGDGYSY…KWEYCDVTVC (84 aa)). Residues 312–553 (IYGGFKSTAG…FLNWIKTTMH (242 aa)) form the Peptidase S1 domain. Active-site charge relay system residues include His360 and Asp409. Catalysis depends on Ser507, which acts as the Charge relay system.

The protein belongs to the peptidase S1 family. As to quaternary structure, heterodimer; disulfide-linked. Heterodimer of a 50 kDa heavy and a 27 kDa light chain linked by a disulfide bond. Post-translationally, proteolytic cleavage at Gly-23 or Met-27 can give rise to the 50 kDa heavy chain (HC) and cleavage at Arg-311 or Lys-317 can give rise to the 27 kDa light chain (LC). The HC can undergo further proteolytic cleavage giving rise to a 26 kDa fragment. The LC can undergo further proteolytic cleavage at Arg-311 leading to a 17-kDa fragment and at Arg-478 leading to a 8-kDa fragment. As to expression, liver and kidney.

The protein resides in the secreted. Functionally, cleaves the alpha-chain at multiple sites and the beta-chain between 'Lys-53' and 'Lys-54' but not the gamma-chain of fibrinogen and therefore does not initiate the formation of the fibrin clot and does not cause the fibrinolysis directly. It does not cleave (activate) prothrombin and plasminogen but converts the inactive single chain urinary plasminogen activator (pro-urokinase) to the active two chain form. Activates coagulation factor VII. May function as a tumor suppressor negatively regulating cell proliferation and cell migration. This Mus musculus (Mouse) protein is Factor VII-activating protease.